Here is a 448-residue protein sequence, read N- to C-terminus: Beclin-1 (448 aa).

At methionine 1 the chain carries N-acetylmethionine. Serine 14 and serine 29 each carry phosphoserine. Phosphoserine; by AMPK occurs at positions 88, 91, and 94. Residues threonine 106–serine 125 carry the BH3 motif. The tract at residues leucine 110–cysteine 157 is interaction with BCL2 and BCL2L1. Residue threonine 117 is modified to Phosphothreonine; by DAPK1. The stretch at aspartate 140 to valine 267 forms a coiled coil. The tract at residues aspartate 243–lysine 448 is evolutionary conserved domain (ECD). Residues lysine 400 and lysine 435 each participate in a glycyl lysine isopeptide (Lys-Gly) (interchain with G-Cter in ubiquitin) cross-link. Positions tryptophan 423 to lysine 448 are required for membrane-association.

This sequence belongs to the beclin family. As to quaternary structure, a homodimeric form is proposed to exist; this metastable form readily transits to ATG14- or UVRAG-containing complexes with BECN1:UVRAG being more stable than BECN1:ATG14. Component of the PI3K (PI3KC3/PI3K-III/class III phosphatidylinositol 3-kinase) complex the core of which is composed of the catalytic subunit PIK3C3, the regulatory subunit PIK3R4 and BECN1 associating with additional regulatory/auxiliary subunits to form alternative complex forms. Alternative complex forms containing a fourth regulatory subunit in a mutually exclusive manner are PI3K complex I (PI3KC3-C1) containing ATG14, and PI3K complex II (PI3KC3-C2) containing UVRAG. PI3KC3-C1 displays a V-shaped architecture with PIK3R4 serving as a bridge between PIK3C3 and the ATG14:BECN1 subcomplex. Both, PI3KC3-C1 and PI3KC3-C2, can associate with further regulatory subunits, such as RUBCN, SH3GLB1/Bif-1 and AMBRA1. PI3KC3-C1 probably associates with PIK3CB. Forms a complex with PPP2CA and AMBRA1; AMBRA1 and BECN1 components of the complex regulate MYC stability via different pathways. Component of the complex, at least composed of LRPPRC, BECN1 and BCL2; the interactions prevent BECN1 from forming an autophagy-inducing complex with PIK3C3. Interacts with AMBRA1, GOPC, GRID2. Interacts with BCL2 and BCL2L1 isoform Bcl-X(L); the interaction inhibits BECN1 function in promoting autophagy by interfering with the formation of the PI3K complex. Interacts with cytosolic HMGB1; inhibits the interaction of BECN1 and BCL2 leading to promotion of autophagy. Interacts with USP10, USP13, VMP1, DAPK1, RAB39A. Interacts with the poly-Gln domain of ATXN3; the interaction causes deubiquitination at Lys-400 and stabilizes BECN1. Interacts with SLAMF1. Interacts with TRIM5; the interaction causes activation of BECN1 by causing its dissociation from its inhibitors BCL2 and TAB2. Interacts with active ULK1 (phosphorylated on 'Ser-317') and MEFV simultaneously. Interacts with WDR81 and WDR91; negatively regulates the PI3 kinase/PI3K activity associated with endosomal membranes. Interacts with LAPTM4B; competes with EGFR for LAPTM4B binding; regulates EGFR activity. Interacts with TRIM50. Interacts with TRIM16. Interacts with ATG14; this interaction is increased in the absence of TMEM39A. Interacts with WASHC1; preventing interaction with AMBRA1 and the DCX(AMBRA1) complex and subsequent ubiquitination. Interacts with TRIM17. Interacts with BCL2L10/BCL-B (via BH1 domain). Interacts with SH3BGRL. Interacts with IRGM; enhancing BECN1-interacting partners and influencing the composition of the BECN1 complex. Interacts with ARMC3. Interacts with LRPPRC. (Microbial infection) Interacts with African swine fever virus (ASFV) apoptosis regulator Bcl-2 homolog; this interaction allows the virus to inhibit BECN1, and thus autophagy. In terms of processing, phosphorylation at Thr-117 by DAPK1 reduces its interaction with BCL2 and BCL2L1 and promotes induction of autophagy. In response to autophagic stimuli, phosphorylated at serine residues by AMPK in an ATG14-dependent manner, and this phosphorylation is critical for maximally efficient autophagy. Post-translationally, polyubiquitinated by NEDD4, both with 'Lys-11'- and 'Lys-63'-linkages. 'Lys-11'-linked polyubiquitination leads to degradation and is enhanced when the stabilizing interaction partner VPS34 is depleted. Deubiquitinated by USP10 and USP13, leading to stabilize the PIK3C3/VPS34-containing complexes. Polyubiquitinated at Lys-400 with 'Lys-48'-linkages. 'Lys-48'-linked polyubiquitination of Lys-400 leads to degradation. Deubiquitinated by ATXN3, leading to stabilization. Ubiquitinated at Lys-435 via 'Lys-63'-linkage by the DCX(AMBRA1) complex, thereby increasing the association between BECN1 and PIK3C3 to promote PIK3C3 activity. 'Lys-48'-linked ubiquitination by RNF216 leads to proteasomal degradation and autophagy inhibition. Proteolytically processed by caspases including CASP8 and CASP3; the C-terminal fragments lack autophagy-inducing capacity and are proposed to induce apoptosis. Thus the cleavage is proposed to be an determinant to switch from autophagy to apoptosis pathways affecting cellular homeostasis including viral infections and survival of tumor cells.

The protein resides in the cytoplasm. The protein localises to the golgi apparatus. Its subcellular location is the trans-Golgi network membrane. It is found in the endosome membrane. It localises to the endoplasmic reticulum membrane. The protein resides in the mitochondrion membrane. The protein localises to the cytoplasmic vesicle. Its subcellular location is the autophagosome. It is found in the mitochondrion. It localises to the nucleus. In terms of biological role, plays a central role in autophagy. Acts as a core subunit of the PI3K complex that mediates formation of phosphatidylinositol 3-phosphate; different complex forms are believed to play a role in multiple membrane trafficking pathways: PI3KC3-C1 is involved in initiation of autophagosomes and PI3KC3-C2 in maturation of autophagosomes and endocytosis. Involved in regulation of degradative endocytic trafficking and required for the abscission step in cytokinesis, probably in the context of PI3KC3-C2. Essential for the formation of PI3KC3-C2 but not PI3KC3-C1 PI3K complex forms. Involved in endocytosis. May play a role in antiviral host defense. Its function is as follows. Beclin-1-C 35 kDa localized to mitochondria can promote apoptosis; it induces the mitochondrial translocation of BAX and the release of proapoptotic factors. This Sus scrofa (Pig) protein is Beclin-1 (BECN1).